A 1846-amino-acid chain; its full sequence is Peripheral-type benzodiazepine receptor-associated protein 1 (1846 aa).

Disordered regions lie at residues 57–97 (EESS…GYSC), 281–318 (NQRE…DDVE), and 560–628 (GPKD…SEVE). The span at 576 to 587 (PKSSEPALTTLT) shows a compositional bias: polar residues. Over residues 599 to 612 (SLSNSSRSESIHNS) the composition is skewed to low complexity. The 68-residue stretch at 649 to 716 (ARIQVFLARY…PSNFVERVSD (68 aa)) folds into the SH3 1 domain. A disordered region spans residues 726 to 785 (ELADSSHSSGPELSFLSGGGGGCSSGGQSSGGRSQPRPEEEAAGDELSLSPPPEGLGEPL). Positions 742–755 (SGGGGGCSSGGQSS) are enriched in gly residues. Fibronectin type-III domains are found at residues 787 to 878 (VPYP…AGAG), 880 to 972 (VPSQ…TLPA), and 977 to 1075 (APLD…PALA). Disordered regions lie at residues 1084–1107 (SCLS…GLGD), 1163–1219 (EPTL…LDSG), 1243–1302 (HSRN…SDEE), 1322–1476 (SIPE…PESS), 1492–1617 (YDSE…QDLP), 1704–1755 (LTEA…AAQK), and 1812–1846 (VPSN…RVQC). The segment covering 1202–1219 (TQKKPSIEACHGGDLDSG) has biased composition (basic and acidic residues). A compositionally biased stretch (acidic residues) spans 1251 to 1265 (DIQEEEEEEEEEEEE). Residues 1270–1283 (PCSSQKQVAGNSIR) are compositionally biased toward polar residues. Over residues 1324–1335 (PEEEEEEEEEEG) the composition is skewed to acidic residues. Basic and acidic residues-rich tracts occupy residues 1411–1420 (RPQDPREHCS) and 1545–1577 (AWEK…ESRG). Residues 1616–1684 (LPVRVFVALF…PCNMVAEVAV (69 aa)) form the SH3 2 domain. The segment covering 1705–1719 (TEASGNGPSVYSSAH) has biased composition (polar residues). In terms of domain architecture, SH3 3 spans 1755-1822 (KTSRPMVAAF…PSNFLEGPGP (68 aa)). The segment covering 1817 to 1830 (LEGPGPESGSLESG) has biased composition (low complexity).

This sequence belongs to the RIMBP family. As to quaternary structure, interacts with RIMS1 and RIMS2. Interacts with TSPO. Interacts with CACNA1A. As to expression, predominantly expressed in the brain.

It is found in the cytoplasm. Its subcellular location is the mitochondrion. Functionally, required for synaptic transmission regulation. It probably controls the recruitement of voltage-gated calcium channels to the presynaptic membrane, and modulates neurotransmitter release. This Mus musculus (Mouse) protein is Peripheral-type benzodiazepine receptor-associated protein 1.